The sequence spans 510 residues: Histidine ammonia-lyase (510 aa).

A cross-link (5-imidazolinone (Ala-Gly)) is located at residues 143–145 (ASG). Ser-144 is modified (2,3-didehydroalanine (Ser)).

The protein belongs to the PAL/histidase family. In terms of processing, contains an active site 4-methylidene-imidazol-5-one (MIO), which is formed autocatalytically by cyclization and dehydration of residues Ala-Ser-Gly.

It localises to the cytoplasm. The enzyme catalyses L-histidine = trans-urocanate + NH4(+). The protein operates within amino-acid degradation; L-histidine degradation into L-glutamate; N-formimidoyl-L-glutamate from L-histidine: step 1/3. The polypeptide is Histidine ammonia-lyase (Psychromonas ingrahamii (strain DSM 17664 / CCUG 51855 / 37)).